The sequence spans 76 residues: MVCIPCIVIPVLLWIYKKFLEPYIYPLVSPFVSRIWPKKAIQESNDTNKGKVNFKGADMNGLPTKGPTEICDKKKD.

Positions 1–37 are necessary for its localzation to the endoplasmic reticulum and lipid droplets; it reads MVCIPCIVIPVLLWIYKKFLEPYIYPLVSPFVSRIWP. Positions 46–76 are disordered; it reads DTNKGKVNFKGADMNGLPTKGPTEICDKKKD.

Belongs to the UPF0729 family. In terms of assembly, interacts with DERL1 and AMFR. In terms of processing, undergoes ER-associated degradation (ERAD).

The protein resides in the endoplasmic reticulum. Its subcellular location is the lipid droplet. Functionally, may activate the NF-kappa-B signaling pathway. This Homo sapiens (Human) protein is UPF0729 protein C18orf32 (C18orf32).